We begin with the raw amino-acid sequence, 345 residues long: Achaete-scute complex protein T4 (345 aa).

The span at 78 to 92 (SESVSSLSPGSSPAP) shows a compositional bias: low complexity. The tract at residues 78–109 (SESVSSLSPGSSPAPYNVDQSQSVQRRNARER) is disordered. Residues 99 to 162 (QSVQRRNARE…RIAVEYIRRL (64 aa)) enclose the bHLH domain.

Efficient DNA binding requires dimerization with another bHLH protein. Interacts with da (via bHLH motif). Interacts with Bap60. As to expression, l(1)SC, SC and AC strongly label the presumptive stomatogastric nervous system, while ASE is more prominent in the presumptive procephalic lobe. Associates with the somatic nuclei through nuclear cycles 9 and 10. During nuclear cycle 11 distributes uniformly in the embryo.

AS-C proteins are involved in the determination of the neuronal precursors in the peripheral nervous system and the central nervous system. Also involved in sex determination and dosage compensation. The sequence is that of Achaete-scute complex protein T4 (sc) from Drosophila melanogaster (Fruit fly).